The chain runs to 616 residues: MPKYRSATTTHGRNMAGARALWRATGMTDNDFGKPIIAVVNSFTQFVPGHVHLRDLGKLVAEQIEASGGVAKEFNTIAVDDGIAMGHGGMLYSLPSRELIADSVEYMVNAHCADAMVCISNCDKITPGMLMASLRLNIPVIFVSGGPMEAGKTKLSDQIIKLDLVDAMIQGADPKVSDEQSEQVERSACPTCGSCSGMFTANSMNCLTEALGLSQPGNGSLLATHADRKQLFLNAGKRIVGLAKRYYEQDDESVLPRNIANKAAFENAMILDIAMGGSTNTVLHLLAAAQEGEVDFTMTDIDRLSRQVPHLCKVAPSTQKYHMEDVHRAGGVIGILGELDRAGLLNREVNNVLGKTLPETLEAYDVMLTQDDSVKSMYSAGPAGIRTTQAFSQDCRWDSLDTDRQEGCIRSREFAYSQDGGLAVLYGNLAENGCIVKTAGVDEGSLVFRGPAKVYESQDDAVDAILGGKVVAGDVVVIRYEGPKGGPGMQEMLYPTTYLKSMGLGKSCALITDGRFSGGTSGLSIGHASPEAASGGTIALVQDGDIIAIDIPNRSIALVLDDNALASRRAAEEARGDQAWTPHNRERQVSFALRAYASLATSADKGAVRDKSKLGG.

D81 serves as a coordination point for Mg(2+). C122 provides a ligand contact to [2Fe-2S] cluster. Residues D123 and K124 each coordinate Mg(2+). The residue at position 124 (K124) is an N6-carboxylysine. Residue C195 coordinates [2Fe-2S] cluster. Residue E491 coordinates Mg(2+). Catalysis depends on S517, which acts as the Proton acceptor.

The protein belongs to the IlvD/Edd family. Homodimer. [2Fe-2S] cluster serves as cofactor. Mg(2+) is required as a cofactor.

The enzyme catalyses (2R)-2,3-dihydroxy-3-methylbutanoate = 3-methyl-2-oxobutanoate + H2O. The catalysed reaction is (2R,3R)-2,3-dihydroxy-3-methylpentanoate = (S)-3-methyl-2-oxopentanoate + H2O. It functions in the pathway amino-acid biosynthesis; L-isoleucine biosynthesis; L-isoleucine from 2-oxobutanoate: step 3/4. Its pathway is amino-acid biosynthesis; L-valine biosynthesis; L-valine from pyruvate: step 3/4. Its function is as follows. Functions in the biosynthesis of branched-chain amino acids. Catalyzes the dehydration of (2R,3R)-2,3-dihydroxy-3-methylpentanoate (2,3-dihydroxy-3-methylvalerate) into 2-oxo-3-methylpentanoate (2-oxo-3-methylvalerate) and of (2R)-2,3-dihydroxy-3-methylbutanoate (2,3-dihydroxyisovalerate) into 2-oxo-3-methylbutanoate (2-oxoisovalerate), the penultimate precursor to L-isoleucine and L-valine, respectively. In Pectobacterium carotovorum subsp. carotovorum (strain PC1), this protein is Dihydroxy-acid dehydratase.